Reading from the N-terminus, the 665-residue chain is Fructose-1,6-bisphosphatase class 3 (665 aa).

Belongs to the FBPase class 3 family. Mn(2+) serves as cofactor.

It catalyses the reaction beta-D-fructose 1,6-bisphosphate + H2O = beta-D-fructose 6-phosphate + phosphate. It participates in carbohydrate biosynthesis; gluconeogenesis. The chain is Fructose-1,6-bisphosphatase class 3 from Alkaliphilus metalliredigens (strain QYMF).